The chain runs to 179 residues: ATP-dependent protease subunit HslV (179 aa).

Threonine 7 is an active-site residue. Positions 162, 165, and 168 each coordinate Na(+).

This sequence belongs to the peptidase T1B family. HslV subfamily. A double ring-shaped homohexamer of HslV is capped on each side by a ring-shaped HslU homohexamer. The assembly of the HslU/HslV complex is dependent on binding of ATP.

It localises to the cytoplasm. The enzyme catalyses ATP-dependent cleavage of peptide bonds with broad specificity.. With respect to regulation, allosterically activated by HslU binding. In terms of biological role, protease subunit of a proteasome-like degradation complex believed to be a general protein degrading machinery. The protein is ATP-dependent protease subunit HslV of Bordetella avium (strain 197N).